We begin with the raw amino-acid sequence, 68 residues long: Large ribosomal subunit protein uL29 (68 aa).

Belongs to the universal ribosomal protein uL29 family.

This chain is Large ribosomal subunit protein uL29 (rpl29), found in Pyrococcus abyssi (strain GE5 / Orsay).